The sequence spans 91 residues: Large ribosomal subunit protein eL43 (91 aa).

The segment at 39 to 60 adopts a C4-type zinc-finger fold; that stretch reads CSFCGKEAMKRKATGIWNCAKC.

It belongs to the eukaryotic ribosomal protein eL43 family.

In Caenorhabditis elegans, this protein is Large ribosomal subunit protein eL43.